The primary structure comprises 493 residues: Dipeptide permease D (493 aa).

The next 13 membrane-spanning stretches (helical) occupy residues 14–34 (VVAL…LLIL), 49–69 (ELFS…GYLA), 91–111 (LVLG…AIIV), 138–158 (GGFS…PIAC), 167–187 (WAMG…IFLC), 212–232 (NWGW…VLFW), 235–255 (WSVY…AKIY), 267–287 (LGLI…AQQG), 312–332 (MFQS…AWLV), 344–364 (IWGK…ILTL), 379–399 (LMVL…PVAM), 413–433 (VLTG…AGVI), and 458–478 (VFEQ…LIWL).

Belongs to the major facilitator superfamily. Proton-dependent oligopeptide transporter (POT/PTR) (TC 2.A.17) family. DtpD subfamily.

Its subcellular location is the cell inner membrane. In terms of biological role, probable proton-dependent permease that transports dipeptides. In Salmonella choleraesuis (strain SC-B67), this protein is Dipeptide permease D.